Here is a 385-residue protein sequence, read N- to C-terminus: Elongation factor Ts, mitochondrial (385 aa).

The N-terminal 50 residues, 1 to 50 (MAWSQSARKPMIGLLFRAQQHGARGYSYSAFQAHLSSSNVDQSATLLRRF), are a transit peptide targeting the mitochondrion.

It belongs to the EF-Ts family.

It is found in the mitochondrion. Associates with the EF-Tu.GDP complex and induces the exchange of GDP to GTP. It remains bound to the aminoacyl-tRNA.EF-Tu.GTP complex up to the GTP hydrolysis stage on the ribosome. The protein is Elongation factor Ts, mitochondrial of Oryza sativa subsp. indica (Rice).